Consider the following 1299-residue polypeptide: MLDVNFFDELRIGLATADDIRQWSHGEVKKPETINYRTLKPEKDGLFCEKIFGPTRDWECYCGKYKRVRFKGIICERCGVEVTRAKVRRERMGHIELAAPVTHIWYFKGVPSRLGYLLDLAPKDLEKVIYFAAYMITFVDEERRTRDLPSLEAHVSVERQQIEQRRDSDLEARAKKLETDLAELEAEGAKADVRRKVREGAEREMKQLRDRAQREIDRLDEVWNRFKNLKVQDLEGDELLYRELRDRFGTYFDGSMGAAALQKRLESFDLDEEAERLREIIRTGKGQKKTRALKRLKVVSAFLQTSNSPKGMVLDCVPVIPPDLRPMVQLDGGRFATSDLNDLYRRVINRNNRLKRLLDLGAPEIIVNNEKRMLQEAVDALFDNGRRGRPVTGPGNRPLKSLSDMLKGKQGRFRQNLLGKRVDYSARSVIVVGPQLKLHQCGLPKAMALELFKPFVMKRLVDLNHAQNIKSAKRMVERGRTVVYDVLEEVIAEHPVLLNRAPTLHRLGIQAFEPQLVEGKAIQIHPLVCTAFNADFDGDQMAVHLPLSAEAQAEARILMLSSNNILKPADGRPVTMPTQDMVLGLFFLTTDSEGRSPKGEGRAFGSSAEAIMAFDAGDLTLQAKIDIRFPVGTIPPRGFEPPAREEGEPEWQQGDTFTLKTTLGRALFNELLPEDYPFVDYEVGKKQLSEIVNDLAERYPKVIVAATLDNLKAAGFFWATRSGVTVAISDIVVPDAKKEIVKGYEGQDEKVQKQYERGLITKEERTQELIAIWTKATNEVAEAMNDNFPKTNPVSMMVNSGARGNMMQMRQIAGMRGLVSNAKNETIPRPIKASFREGLSVLEYFISTHGARKGLADTALRTADSGYLTRRLVDVSQDVIIREEDCGTERGLKLPIATRDADGTLRKAEDVETSVYARMLAEDVVIDGKVIAPANVDLGDVLIDALVAHGVEEVKTRSILTCESQVGTCAMCYGRSLATGKLVDIGEAVGIIAAQSIGEPGTQLTMRTFHTGGVAGDDITQGLPRVVELFEARTPKGVAPISEASGRVRIEETEKTKKIVVTPDDGSDETAFPISKRARLLVGEGDHVEVGQKLTVGATNPHDVLRILGQRAVQVHLVGEVQKVYNSQGVSIHDKHIEIIIRQMLRRVTIIESGDAELLPGELVERTKFETENRRVVQEGGHPASGRPQLMGITKASLATESWLSAASFQETTRVLTDAAINAKSDSLIGLKENVIIGKLIPAGTGLSRYRNIRVEPTEEAKAAMYSAVGYDDIDYSPFGTGSGQAVPLEDYDYGPYNQ.

4 residues coordinate Zn(2+): cysteine 60, cysteine 62, cysteine 75, and cysteine 78. Positions 385-405 (GRRGRPVTGPGNRPLKSLSDM) are disordered. The Mg(2+) site is built by aspartate 535, aspartate 537, and aspartate 539. The Zn(2+) site is built by cysteine 886, cysteine 962, cysteine 969, and cysteine 972.

The protein belongs to the RNA polymerase beta' chain family. In terms of assembly, the RNAP catalytic core consists of 2 alpha, 1 beta, 1 beta' and 1 omega subunit. When a sigma factor is associated with the core the holoenzyme is formed, which can initiate transcription. Mg(2+) is required as a cofactor. Zn(2+) serves as cofactor.

The catalysed reaction is RNA(n) + a ribonucleoside 5'-triphosphate = RNA(n+1) + diphosphate. In terms of biological role, DNA-dependent RNA polymerase catalyzes the transcription of DNA into RNA using the four ribonucleoside triphosphates as substrates. The sequence is that of DNA-directed RNA polymerase subunit beta' from Streptomyces coelicolor (strain ATCC BAA-471 / A3(2) / M145).